Here is a 201-residue protein sequence, read N- to C-terminus: Recombination protein RecR (201 aa).

The C4-type zinc-finger motif lies at 60–75 (CSVCGNVDTTDPCSIC). The 96-residue stretch at 83 to 178 (TTIIVVEDVA…KITRLAHGVP (96 aa)) folds into the Toprim domain.

The protein belongs to the RecR family.

Its function is as follows. May play a role in DNA repair. It seems to be involved in an RecBC-independent recombinational process of DNA repair. It may act with RecF and RecO. The polypeptide is Recombination protein RecR (Bartonella quintana (strain Toulouse) (Rochalimaea quintana)).